Reading from the N-terminus, the 388-residue chain is N5-carboxyaminoimidazole ribonucleotide synthase (388 aa).

Residues K105, K140, 174-177 (ESFV), E182, and 267-268 (NE) each bind ATP. One can recognise an ATP-grasp domain in the interval 109–297 (RHFLQNLGLP…QFALQLQAVT (189 aa)).

The protein belongs to the PurK/PurT family. Homodimer.

The enzyme catalyses 5-amino-1-(5-phospho-beta-D-ribosyl)imidazole + hydrogencarbonate + ATP = 5-carboxyamino-1-(5-phospho-D-ribosyl)imidazole + ADP + phosphate + 2 H(+). The protein operates within purine metabolism; IMP biosynthesis via de novo pathway; 5-amino-1-(5-phospho-D-ribosyl)imidazole-4-carboxylate from 5-amino-1-(5-phospho-D-ribosyl)imidazole (N5-CAIR route): step 1/2. In terms of biological role, catalyzes the ATP-dependent conversion of 5-aminoimidazole ribonucleotide (AIR) and HCO(3)(-) to N5-carboxyaminoimidazole ribonucleotide (N5-CAIR). This Synechocystis sp. (strain ATCC 27184 / PCC 6803 / Kazusa) protein is N5-carboxyaminoimidazole ribonucleotide synthase.